The sequence spans 141 residues: 3-hydroxyacyl-[acyl-carrier-protein] dehydratase FabZ (141 aa).

The active site involves His-49.

Belongs to the thioester dehydratase family. FabZ subfamily.

The protein resides in the cytoplasm. It carries out the reaction a (3R)-hydroxyacyl-[ACP] = a (2E)-enoyl-[ACP] + H2O. In terms of biological role, involved in unsaturated fatty acids biosynthesis. Catalyzes the dehydration of short chain beta-hydroxyacyl-ACPs and long chain saturated and unsaturated beta-hydroxyacyl-ACPs. The polypeptide is 3-hydroxyacyl-[acyl-carrier-protein] dehydratase FabZ (fabZ2) (Enterococcus faecalis (strain ATCC 700802 / V583)).